The sequence spans 1223 residues: Kinesin-like protein costa (1223 aa).

Residues 4-394 (PIQVAVRICP…LQFAFKVQCV (391 aa)) form the Kinesin motor domain. A disordered region spans residues 13–90 (PYTEPSENRK…LPTDSNGNEN (78 aa)). Over residues 39–62 (AKAESFSDSEDNKNDASNRQRPEE) the composition is skewed to basic and acidic residues. ATP is bound at residue 178–185 (GQRGQGKT). Disordered stretches follow at residues 494–528 (RSQK…ESQR), 560–604 (KHPK…SIQP), and 625–646 (TAQP…ESSA). The segment covering 569–593 (QERDKESKLDAPPEKDKEKIEERKT) has biased composition (basic and acidic residues). Coiled-coil stretches lie at residues 658–743 (AAAN…QGRE), 773–825 (ESGQ…GASG), and 982–1015 (NKVI…ERVL). The disordered stretch occupies residues 774-799 (SGQKLKKLQQSMAESRKQQEELEKKI). The span at 787-799 (ESRKQQEELEKKI) shows a compositional bias: basic and acidic residues. Low complexity predominate over residues 1162 to 1178 (TTTATATTTTTTTTTTT). The disordered stretch occupies residues 1162–1188 (TTTATATTTTTTTTTTTGGKGKERGLP).

The protein belongs to the TRAFAC class myosin-kinesin ATPase superfamily. Kinesin family. KIF27 subfamily. Homodimer (Potential). Binds microtubules. Interacts with ci, smo, sgg, CkIalpha and protein kinase A catalytic subunit.

It localises to the cytoplasm. It is found in the cytoskeleton. In terms of biological role, regulates cubitus interruptus (ci) processing by recruiting multiple kinases to promote its efficient phosphorylation. Scaffolds multiple kinases and ci into proximity to promote its hyperphosphorylation, which then targets it for SCFSlimb/proteasome-mediated processing to generate its repressor form. Hh signaling inhibits ci phosphorylation by interfering with the cos-ci-kinases complex formation. In Drosophila pseudoobscura pseudoobscura (Fruit fly), this protein is Kinesin-like protein costa (cos).